The sequence spans 259 residues: Dihydroorotate dehydrogenase B (NAD(+)), electron transfer subunit (259 aa).

The region spanning 2 to 102 (MQKQNMIVVN…LGPLGHGFPV (101 aa)) is the FAD-binding FR-type domain. Residues 53-56 (RPIS), 70-72 (LYR), and 77-78 (GT) each bind FAD. [2Fe-2S] cluster contacts are provided by cysteine 221, cysteine 226, cysteine 229, and cysteine 246.

This sequence belongs to the PyrK family. As to quaternary structure, heterotetramer of 2 PyrK and 2 PyrD type B subunits. [2Fe-2S] cluster is required as a cofactor. It depends on FAD as a cofactor.

It functions in the pathway pyrimidine metabolism; UMP biosynthesis via de novo pathway; orotate from (S)-dihydroorotate (NAD(+) route): step 1/1. Responsible for channeling the electrons from the oxidation of dihydroorotate from the FMN redox center in the PyrD type B subunit to the ultimate electron acceptor NAD(+). This chain is Dihydroorotate dehydrogenase B (NAD(+)), electron transfer subunit, found in Bacillus cereus (strain G9842).